Here is a 257-residue protein sequence, read N- to C-terminus: BTB/POZ domain-containing protein kctd15-like (257 aa).

A phosphoserine mark is found at serine 9 and serine 12. The BTB domain maps to 30-100 (APVHIDVGGH…LRTSKLLLPE (71 aa)).

In Danio rerio (Zebrafish), this protein is BTB/POZ domain-containing protein kctd15-like (kctd15l).